The primary structure comprises 619 residues: Probable Xaa-Pro aminopeptidase P (619 aa).

Residues D415, D426, E524, and E538 each coordinate Mn(2+).

Belongs to the peptidase M24B family. Requires Mn(2+) as cofactor.

The catalysed reaction is Release of any N-terminal amino acid, including proline, that is linked to proline, even from a dipeptide or tripeptide.. Functionally, catalyzes the removal of a penultimate prolyl residue from the N-termini of peptides. In Fusarium vanettenii (strain ATCC MYA-4622 / CBS 123669 / FGSC 9596 / NRRL 45880 / 77-13-4) (Fusarium solani subsp. pisi), this protein is Probable Xaa-Pro aminopeptidase P (AMPP).